The sequence spans 318 residues: Ankyrin repeat and SOCS box protein 7 (318 aa).

ANK repeat units follow at residues 13–42, 46–75, 80–109, 116–145, 149–178, 180–208, and 213–242; these read QEEL…SPNG, NGWT…DPTV, GGFT…RSDI, DGWT…EVDP, KGTT…NIDI, NGFL…DTDL, and DGQT…DTNT. An SOCS box domain is found at 265-318; sequence LDFLQEVTRQPRNLQDLCRIKIRQCIGLQNLKLLDELPIAKVMKDYLKHKFDDI.

The protein belongs to the ankyrin SOCS box (ASB) family. Interacts with CUL5. Interacts with RNF7. Interacts with PSRC1.

It participates in protein modification; protein ubiquitination. Probable substrate-recognition component of a SCF-like ECS (Elongin-Cullin-SOCS-box protein) E3 ubiquitin-protein ligase complex which mediates the ubiquitination and subsequent proteasomal degradation of target proteins. Plays a role in spindle dynamics and genome integrity by targeting the mitotic progression protein PSRC1 for proteasomal degradation in a cell cycle-dependent manner. Also participates in meiosis by mediating the proper attachment between kinetochores and microtubules. The polypeptide is Ankyrin repeat and SOCS box protein 7 (ASB7) (Macaca fascicularis (Crab-eating macaque)).